We begin with the raw amino-acid sequence, 341 residues long: Porin-like protein L (341 aa).

A signal peptide spans 1-21 (MNKKLIALAVAAASISSVATA).

The protein belongs to the Gram-negative porin family. As to quaternary structure, homotrimer.

The protein localises to the cell outer membrane. Its function is as follows. Forms pores that allow passive diffusion of small molecules across the outer membrane. This is Porin-like protein L (ompL) from Photobacterium profundum (strain SS9).